The sequence spans 411 residues: Argininosuccinate synthase (411 aa).

ATP contacts are provided by residues 11–19 (AYSGGLDTS) and Ala-37. The L-citrulline site is built by Tyr-88 and Ser-93. Position 116-124 (116-124 (SHGATGKGN)) interacts with ATP. L-aspartate contacts are provided by Thr-120, Asn-124, and Asp-125. Residue Asn-124 participates in L-citrulline binding. L-citrulline contacts are provided by Arg-128, Ser-181, Ser-190, Glu-271, and Tyr-283.

Belongs to the argininosuccinate synthase family. Homotetramer.

It is found in the cytoplasm. The protein resides in the cytosol. The enzyme catalyses L-citrulline + L-aspartate + ATP = 2-(N(omega)-L-arginino)succinate + AMP + diphosphate + H(+). It functions in the pathway amino-acid biosynthesis; L-arginine biosynthesis; L-arginine from L-ornithine and carbamoyl phosphate: step 2/3. It participates in nitrogen metabolism; urea cycle; (N(omega)-L-arginino)succinate from L-aspartate and L-citrulline: step 1/1. One of the enzymes of the urea cycle, the metabolic pathway transforming neurotoxic amonia produced by protein catabolism into inocuous urea in the liver of ureotelic animals. Catalyzes the formation of arginosuccinate from aspartate, citrulline and ATP and together with ASL it is responsible for the biosynthesis of arginine in most body tissues. In Xenopus laevis (African clawed frog), this protein is Argininosuccinate synthase.